The chain runs to 400 residues: MTFEDVAVEFSQWEWGQLNPAQKDLYREVMLENFRNLAILGLLVSKPYVICQLEEGGEPFMVEREISTGAHSDWKRRSKSKESMPSWGISKEELFQVVSVEKHIQDVLQFSKLKAACGCDGQLEMQQIKQERHLKQMSTIHKSATTLSRDYKWNGFGRSLGLRSVLVNQHSILMGEGSYKCDTEFRQTLGGNNSQRTHPEKKSCKCNECGKSFHFQSELRRHQRCHTGEKPYECSDCGRAFGHISSLIKHQRTHTGEKPYECSECGRAFSQSSSLVLHYRFHTGEKPYKCNECGRAFGHTSSLIKHQRTHTGEKPYECRECGRTFSQSSSLIVHYRFHTGEKPYKCNKCGRAFSQSSSLTQHYRFHTGEKPYKCNECGRAFAHTASLIKHQRSHAGKKTL.

The 72-residue stretch at 1-72 (MTFEDVAVEF…EREISTGAHS (72 aa)) folds into the KRAB domain. 7 C2H2-type zinc fingers span residues 204 to 226 (CKCN…QRCH), 232 to 254 (YECS…QRTH), 260 to 282 (YECS…YRFH), 288 to 310 (YKCN…QRTH), 316 to 338 (YECR…YRFH), 344 to 366 (YKCN…YRFH), and 372 to 394 (YKCN…QRSH).

The protein belongs to the krueppel C2H2-type zinc-finger protein family.

It localises to the nucleus. Functionally, may be involved in transcriptional regulation. The protein is Zinc finger protein 514 (ZNF514) of Homo sapiens (Human).